A 101-amino-acid polypeptide reads, in one-letter code: Small ribosomal subunit protein uS10 (101 aa).

This sequence belongs to the universal ribosomal protein uS10 family. As to quaternary structure, part of the 30S ribosomal subunit.

Functionally, involved in the binding of tRNA to the ribosomes. This is Small ribosomal subunit protein uS10 from Mycoplasmopsis synoviae (strain 53) (Mycoplasma synoviae).